The chain runs to 306 residues: MTTIFHADDLLHALQQAKTEKNFSSVFSLDWDKLRIAKRNTSVKYVTVHVMVKGKKAPLMFNFQNEKHVGTISPSTDEEVIRMNAENPKFLVKKRDRDPCLQFNKYKISPPLEDDGFTVKKNEQGEEIYPGDEEKSKLFQIIELLEEAFEDAVQKGPENMKTKNIIKLVQRKISSNAAKNADKSLPNPIARIRIKVNPITNMLAPVLLDKSKPITLQNGKTSFEELKDKDGVKANPDNIHKLIESHSIHDGIINARSICISSMGISFPLCLEMGVVKVFEKNNGIDVDSIYGPDEITNLINQVTIA.

It belongs to the asfivirus CP312R family.

It is found in the virion. This is an uncharacterized protein from African swine fever virus (isolate Pig/Kenya/KEN-50/1950) (ASFV).